Here is a 60-residue protein sequence, read N- to C-terminus: Large ribosomal subunit protein bL32 (60 aa).

Residues 1–16 (MAVPRRKTSPSRRGMR) are compositionally biased toward basic residues. Residues 1-60 (MAVPRRKTSPSRRGMRRSADALKRPTYAEDKDSGELRRPHHLDLKTGMYKGRQVIKKKDA) are disordered. Over residues 17 to 44 (RSADALKRPTYAEDKDSGELRRPHHLDL) the composition is skewed to basic and acidic residues.

This sequence belongs to the bacterial ribosomal protein bL32 family.

This chain is Large ribosomal subunit protein bL32, found in Rhodopseudomonas palustris (strain BisB5).